Here is a 351-residue protein sequence, read N- to C-terminus: UDP-3-O-acylglucosamine N-acyltransferase (351 aa).

Catalysis depends on histidine 240, which acts as the Proton acceptor.

The protein belongs to the transferase hexapeptide repeat family. LpxD subfamily. In terms of assembly, homotrimer.

The enzyme catalyses a UDP-3-O-[(3R)-3-hydroxyacyl]-alpha-D-glucosamine + a (3R)-hydroxyacyl-[ACP] = a UDP-2-N,3-O-bis[(3R)-3-hydroxyacyl]-alpha-D-glucosamine + holo-[ACP] + H(+). It participates in bacterial outer membrane biogenesis; LPS lipid A biosynthesis. In terms of biological role, catalyzes the N-acylation of UDP-3-O-acylglucosamine using 3-hydroxyacyl-ACP as the acyl donor. Is involved in the biosynthesis of lipid A, a phosphorylated glycolipid that anchors the lipopolysaccharide to the outer membrane of the cell. The polypeptide is UDP-3-O-acylglucosamine N-acyltransferase (Pseudomonas putida (strain ATCC 47054 / DSM 6125 / CFBP 8728 / NCIMB 11950 / KT2440)).